A 351-amino-acid chain; its full sequence is Very-long-chain 3-oxoacyl-CoA reductase (351 aa).

A helical membrane pass occupies residues 26–46; the sequence is LLWCAFTVGAVKLTTFMLSLI. Residues Leu72, Asp126, Asn153, Tyr225, Lys229, Val258, and Ser260 each contribute to the NADP(+) site. Residue Tyr225 is the Proton donor of the active site. Residue Lys229 is the Lowers pKa of active site Tyr of the active site.

Belongs to the short-chain dehydrogenases/reductases (SDR) family.

The protein resides in the endoplasmic reticulum membrane. It carries out the reaction a very-long-chain (3R)-3-hydroxyacyl-CoA + NADP(+) = a very-long-chain 3-oxoacyl-CoA + NADPH + H(+). Its pathway is lipid metabolism; fatty acid biosynthesis. Component of the microsomal membrane bound fatty acid elongation system, which produces the 26-carbon very long-chain fatty acids (VLCFA) from palmitate. Catalyzes the reduction of the 3-ketoacyl-CoA intermediate that is formed in each cycle of fatty acid elongation. VLCFAs serve as precursors for ceramide and sphingolipids. The polypeptide is Very-long-chain 3-oxoacyl-CoA reductase (Eremothecium gossypii (strain ATCC 10895 / CBS 109.51 / FGSC 9923 / NRRL Y-1056) (Yeast)).